A 297-amino-acid chain; its full sequence is Mitochondrial thiamine pyrophosphate carrier 1 (297 aa).

Solcar repeat units lie at residues 13–94 (SHVF…TNAA), 102–195 (PPTI…IRAR), and 196–295 (WPET…LMRV). 6 consecutive transmembrane segments (helical) span residues 19-36 (LVSGAIAGLAARSAIAPL), 75-91 (IMYIIYGSVQFGTYSYT), 109-128 (LAGAITGMASSLCSYPFDVL), 163-187 (GLGGFFHGVATSMANVTVSTAAMFG), 203-219 (TAGAISGVISRTITFPL), and 270-287 (GIGLGLLKSVPNTAINLW).

It belongs to the mitochondrial carrier (TC 2.A.29) family.

The protein localises to the mitochondrion inner membrane. Mitochondrial transporter that mediates uptake of thiamine pyrophosphate (ThPP) into mitochondria. The chain is Mitochondrial thiamine pyrophosphate carrier 1 (TPC1) from Vanderwaltozyma polyspora (strain ATCC 22028 / DSM 70294 / BCRC 21397 / CBS 2163 / NBRC 10782 / NRRL Y-8283 / UCD 57-17) (Kluyveromyces polysporus).